Here is a 218-residue protein sequence, read N- to C-terminus: Large ribosomal subunit protein uL1 (218 aa).

This sequence belongs to the universal ribosomal protein uL1 family. In terms of assembly, part of the 50S ribosomal subunit.

Functionally, probably involved in E site tRNA release. Binds directly to 23S rRNA. In terms of biological role, protein L1 is also a translational repressor protein, it controls the translation of its operon by binding to its mRNA. The sequence is that of Large ribosomal subunit protein uL1 from Saccharolobus solfataricus (strain ATCC 35092 / DSM 1617 / JCM 11322 / P2) (Sulfolobus solfataricus).